The following is a 186-amino-acid chain: Serine hydrolase RBBP9 (186 aa).

Residues 63-67 (LHCDE) form an involved in binding to RB1 region. Active-site charge relay system residues include serine 75, aspartate 138, and histidine 165.

This sequence belongs to the RBBP9 family. Interacts with RB1; the interaction disrupts RB1 binding to E2F1. Interacts with RBL1 and RBL2. Expressed at higher levels in tumor tissues such as carcinoma.

The enzyme catalyses valacyclovir + H2O = acyclovir + L-valine + H(+). With respect to regulation, inhibited by the natural product emetine produced by the ipecac root. Its function is as follows. Serine hydrolase. Catalyzes the hydrolytic activation of amino acid ester of the antiviral prodrug valacyclovir to its corresponding active drug, acyclovir. May negatively regulate basal or autocrine TGF-beta signaling by suppressing SMAD2-SMAD3 phosphorylation. May play a role in the transformation process due to its capacity to confer resistance to the growth-inhibitory effects of TGF-beta through interaction with RB1 and the subsequent displacement of E2F1. In Homo sapiens (Human), this protein is Serine hydrolase RBBP9.